The sequence spans 320 residues: Foldase protein PrsA (320 aa).

The first 20 residues, M1 to A20, serve as a signal peptide directing secretion. C21 carries the N-palmitoyl cysteine lipid modification. C21 carries S-diacylglycerol cysteine lipidation. One can recognise a PpiC domain in the interval E139–K245. The tract at residues E159–A198 is disordered.

Belongs to the PrsA family.

Its subcellular location is the cell membrane. The enzyme catalyses [protein]-peptidylproline (omega=180) = [protein]-peptidylproline (omega=0). In terms of biological role, plays a major role in protein secretion by helping the post-translocational extracellular folding of several secreted proteins. This is Foldase protein PrsA from Staphylococcus aureus (strain bovine RF122 / ET3-1).